The chain runs to 267 residues: Glutamate 5-kinase (267 aa).

Residue Lys-18 participates in ATP binding. Ser-58, Asp-145, and Asn-157 together coordinate substrate. ATP contacts are provided by residues 177–178 and 219–225; these read SD and TGGMATK.

The protein belongs to the glutamate 5-kinase family.

It localises to the cytoplasm. It catalyses the reaction L-glutamate + ATP = L-glutamyl 5-phosphate + ADP. It participates in amino-acid biosynthesis; L-proline biosynthesis; L-glutamate 5-semialdehyde from L-glutamate: step 1/2. Its function is as follows. Catalyzes the transfer of a phosphate group to glutamate to form L-glutamate 5-phosphate. This chain is Glutamate 5-kinase, found in Clostridium tetani (strain Massachusetts / E88).